The chain runs to 918 residues: MFGAIARKLFGNANDRVVKGLRKQVEAINAIEPKLTGLSDAELQMRTDWLRDRLAKGETLDDILPDAFATVREAAKRTLGQRHFDVQLMGGMVLHTGKIAEMRTGEGKTLVATLAVYLNALEGKGVHVVTVNDYLAKRDSGWMGQIYRFLGLSVGCIVHGLDDAERRAAYAADITYGTNNEFGFDYLRDNMKYRLADMVQRPFNFAIVDEVDSILIDEARTPLIISGPSTDSSELYIALDKVVRETVQDGDFEKDEKARAVSLTEGGTEKVAQRLIEIGLLKTGDLYDIHNVTLVHHVNQALRAHKLFTRDVDYIVKDDKVVIIDEFTGRMMEGRRYSEGLHQALEAKEGVTIQRENQTLASITFQNYFRLYPKLAGMTGTAMTEAAEFMEIYGLPVVDMPTNLPVRRKDQDDEVYRTADEKYAAIITLIEECRARQQPVLVGTVSIEKSELLSDFLKKKKVPHNVLNARYHEQEAYIVAQAGRPGAVTIATNMAGRGTDIQLGGNLEMRIEHELSDLPEGPEREAAIARIRDEIAAAKEVVLKAGGLYVVGTERHESRRIDNQLRGRSGRQGDPGASKFFLSLEDDLMRIFGSQRLDGMLQKLGLQEGEAIIHPWINKALEKAQTKVEAHNFDIRKNLLKYDNVMNDQRKVVYEQRRDVMDAEDVQDTVVSMRHEVIQEMVSKAIPPNAYAEQWNTDQLHEEVMRVLGADLPVKEWAKEEGIADAEIVERLTRFADETMAEKEAAYGATLMRSIEKSLLLQILDQQWKDHLLNLDHLRQGINLRAYAQRDPLNEYKREAFGLFETMLASLREQVTTVLMHVQVRQADADLPTPPEPVGELTREDPALVPAGAEALPPGMVRRADDQRLRPQAYGAGALPVAETLERDTPESWRNTPRNAPCPCGSGKKYKHCHGQAR.

ATP-binding positions include Q87, 105–109 (GEGKT), and D500. A disordered region spans residues 876–918 (AGALPVAETLERDTPESWRNTPRNAPCPCGSGKKYKHCHGQAR). 4 residues coordinate Zn(2+): C902, C904, C913, and H914. The segment covering 908-918 (KKYKHCHGQAR) has biased composition (basic residues).

Belongs to the SecA family. Monomer and homodimer. Part of the essential Sec protein translocation apparatus which comprises SecA, SecYEG and auxiliary proteins SecDF-YajC and YidC. It depends on Zn(2+) as a cofactor.

It localises to the cell inner membrane. The protein localises to the cytoplasm. The enzyme catalyses ATP + H2O + cellular proteinSide 1 = ADP + phosphate + cellular proteinSide 2.. Its function is as follows. Part of the Sec protein translocase complex. Interacts with the SecYEG preprotein conducting channel. Has a central role in coupling the hydrolysis of ATP to the transfer of proteins into and across the cell membrane, serving both as a receptor for the preprotein-SecB complex and as an ATP-driven molecular motor driving the stepwise translocation of polypeptide chains across the membrane. In Rhodospirillum centenum (strain ATCC 51521 / SW), this protein is Protein translocase subunit SecA.